The chain runs to 88 residues: Small ribosomal subunit protein bS16c (88 aa).

This sequence belongs to the bacterial ribosomal protein bS16 family.

The protein localises to the plastid. It localises to the chloroplast. This chain is Small ribosomal subunit protein bS16c, found in Gossypium hirsutum (Upland cotton).